Reading from the N-terminus, the 127-residue chain is DNA-directed RNA polymerase subunit omega (127 aa).

This sequence belongs to the RNA polymerase subunit omega family. In terms of assembly, the RNAP catalytic core consists of 2 alpha, 1 beta, 1 beta' and 1 omega subunit. When a sigma factor is associated with the core the holoenzyme is formed, which can initiate transcription.

It carries out the reaction RNA(n) + a ribonucleoside 5'-triphosphate = RNA(n+1) + diphosphate. In terms of biological role, promotes RNA polymerase assembly. Latches the N- and C-terminal regions of the beta' subunit thereby facilitating its interaction with the beta and alpha subunits. The polypeptide is DNA-directed RNA polymerase subunit omega (Rickettsia typhi (strain ATCC VR-144 / Wilmington)).